The sequence spans 360 residues: G-protein coupled receptor 15 (360 aa).

Topologically, residues 1-33 are extracellular; that stretch reads MDPEETSVYLDYYYATSPNSDIRETHSHVPYTS. The helical transmembrane segment at 34–54 threads the bilayer; the sequence is VFLPVFYTAVFLTGVLGNLVL. At 55-69 the chain is on the cytoplasmic side; sequence MGALHFKPGSRRLID. A helical transmembrane segment spans residues 70 to 90; sequence IFIINLAASDFIFLVTLPLWV. Over 91-120 the chain is Extracellular; the sequence is DKEASLGLWRTGSFLCKGSSYMISVNMHCS. The chain crosses the membrane as a helical span at residues 121–141; the sequence is VLLLTCMSVDRYLAIVWPVVS. The Cytoplasmic portion of the chain corresponds to 142-149; the sequence is RKFRRTDC. The chain crosses the membrane as a helical span at residues 150–170; it reads AYVVCASIWFISCLLGLPTLL. Topologically, residues 171-192 are extracellular; sequence SRELTLIDDKPYCAEKKATPIK. The helical transmembrane segment at 193–213 threads the bilayer; it reads LIWSLVALIFTFFVPLLSIVT. Over 214 to 239 the chain is Cytoplasmic; the sequence is CYCCIARKLCAHYQQSGKHNKKLKKS. Residues 240–260 form a helical membrane-spanning segment; it reads IKIIFIVVAAFLVSWLPFNTF. Residues 261-284 are Extracellular-facing; it reads KFLAIVSGLRQEHYLPSAILQLGM. A helical membrane pass occupies residues 285–305; that stretch reads EVSGPLAFANSCVNPFIYYIF. The Cytoplasmic portion of the chain corresponds to 306 to 360; it reads DSYIRRAIVHCLCPCLKNYDFGSSTETSDSHLTKALSTFIHAEDFARRRKRSVSL. Serine 359 carries the phosphoserine modification.

This sequence belongs to the G-protein coupled receptor 1 family. In terms of assembly, interacts with adapter YWHAE; this interaction promotes ER-to-Golgi transport of GPR15. Interacts with GNAI1; this interaction initiates the signaling pathway. In terms of processing, phosphorylation is necessary for YWHAE binding and efficient surface expression. Post-translationally, O-glycosylated. Sialylated O-glycans in the N-terminal tail inhibits binding of GPR15LG. Sulfation is required for efficient binding of GPR15LG. Highly expressed in lymphoid tissues, including macrophages and peripheral blood mononuclear cells.

Its subcellular location is the cell membrane. Functionally, g protein-coupled receptor that plays an important role in immune homeostasis. Acts via its natural ligand GPR15LG, a chemokine-like polypeptide strongly expressed in gastrointestinal tissues. GPR15-GPR15LG signaling axis regulates intestinal homeostasis and inflammation through the migration of immune cells. Controls thereby the specific homing of T-cells, particularly FOXP3+ regulatory T-cells (Tregs), to the large intestine lamina propria. Also required for skin localization of thymus-derived dendritic epidermal T-cells. Plays an important role in mediating cytoprotective function as well as angiogenesis of thrombomodulin. Mechanistically, preferentially signals through the Gi/o pathway to inhibit adenylate cyclase activity and activate a phosphatidylinositol-calcium second messenger system that regulates the release of Ca(2+) ions from intracellular stores. (Microbial infection) Acts as an alternative coreceptor with CD4 for HIV-1 infection. This chain is G-protein coupled receptor 15 (GPR15), found in Homo sapiens (Human).